The sequence spans 25 residues: Antifungal protein 1 (25 aa).

The interval 1–25 (QSERFEQQMQGQDFSHDERFLSQAA) is disordered. The span at 14-25 (FSHDERFLSQAA) shows a compositional bias: basic and acidic residues.

Belongs to the 2S seed storage albumins family. In terms of tissue distribution, expressed in seed (at protein level). Not detected in pulp, stems and leaves.

In terms of biological role, has strong antifungal activity against T.harzianum, F.oxysporum and A.fumigatus with IC(50) values of 32 ug/ml, 34 ug/ml and 40 ug/ml, restectively. Lacks antifungal activity against R.solani, P.brasiliensis and C.albicans. The sequence is that of Antifungal protein 1 from Passiflora edulis (Passion fruit).